A 185-amino-acid chain; its full sequence is DAN domain family member 5 (185 aa).

Positions 1-23 are cleaved as a signal peptide; the sequence is MFRSQFTTLLGLFSGAWLPTGSG. Asparagine 39 carries N-linked (GlcNAc...) asparagine glycosylation. 4 disulfide bridges follow: cysteine 97-cysteine 144, cysteine 111-cysteine 158, cysteine 121-cysteine 179, and cysteine 125-cysteine 181. In terms of domain architecture, CTCK spans 97 to 182; sequence CKALSFVQVI…TVLVQKCQCR (86 aa).

The protein belongs to the DAN family. As to expression, expressed throughout the neural retina and in the photoreceptor nuclear layer. In the retina, widely expressed in inner nuclear layer, as well as in the ganglion cell layer.

It localises to the secreted. In terms of biological role, antagonist of the extracellular signaling protein NODAL, which is required for correct left-right patterning during embryonic development. Antagonist of BMP4 signaling. Antagonist of TGF-beta signaling. Independently of its role in left-right axis establishment, plays a role during heart development, possibly through the regulation of TGF-beta/Nodal signaling pathway. Displays anti-angiogenic activity by inhibiting endothelial sprouting, migration, and proliferation. Once internalized by endothelial cells, may alter their redox and glycolytic balance. The polypeptide is DAN domain family member 5 (Dand5) (Mus musculus (Mouse)).